We begin with the raw amino-acid sequence, 114 residues long: Large ribosomal subunit protein bL21 (114 aa).

It belongs to the bacterial ribosomal protein bL21 family. In terms of assembly, part of the 50S ribosomal subunit. Contacts protein L20.

In terms of biological role, this protein binds to 23S rRNA in the presence of protein L20. The polypeptide is Large ribosomal subunit protein bL21 (Protochlamydia amoebophila (strain UWE25)).